Consider the following 145-residue polypeptide: 3-hydroxyacyl-[acyl-carrier-protein] dehydratase FabZ (145 aa).

The active site involves histidine 51.

It belongs to the thioester dehydratase family. FabZ subfamily.

Its subcellular location is the cytoplasm. It catalyses the reaction a (3R)-hydroxyacyl-[ACP] = a (2E)-enoyl-[ACP] + H2O. Functionally, involved in unsaturated fatty acids biosynthesis. Catalyzes the dehydration of short chain beta-hydroxyacyl-ACPs and long chain saturated and unsaturated beta-hydroxyacyl-ACPs. The protein is 3-hydroxyacyl-[acyl-carrier-protein] dehydratase FabZ of Staphylococcus carnosus (strain TM300).